A 272-amino-acid polypeptide reads, in one-letter code: Undecaprenyl-diphosphatase (272 aa).

7 helical membrane passes run 2-22, 43-63, 82-102, 110-130, 185-205, 224-244, and 252-272; these read FDII…FLPI, FINM…ILLY, WQLW…GLPL, LHTP…FIIL, YVAT…VSIL, VLMT…KWLL, and FKPF…VMFI.

It belongs to the UppP family.

Its subcellular location is the cell membrane. The catalysed reaction is di-trans,octa-cis-undecaprenyl diphosphate + H2O = di-trans,octa-cis-undecaprenyl phosphate + phosphate + H(+). Catalyzes the dephosphorylation of undecaprenyl diphosphate (UPP). Confers resistance to bacitracin. In Lacticaseibacillus paracasei (strain ATCC 334 / BCRC 17002 / CCUG 31169 / CIP 107868 / KCTC 3260 / NRRL B-441) (Lactobacillus paracasei), this protein is Undecaprenyl-diphosphatase.